A 137-amino-acid chain; its full sequence is Mandibular organ-inhibiting hormone (137 aa).

An N-terminal signal peptide occupies residues 1 to 26; the sequence is MTTKCTVMAVVLAACICLQVLPQAYG. Gln63 bears the Pyrrolidone carboxylic acid mark. Cystine bridges form between Cys69/Cys105, Cys85/Cys101, and Cys88/Cys114. A Valine amide modification is found at Val134.

Belongs to the arthropod CHH/MIH/GIH/VIH hormone family. As to expression, produced by the medulla terminalis X-organ in the eyestalks and transported to the sinus gland where it is stored and released.

The protein localises to the secreted. Represses the synthesis of methyl farnesoate, the precursor of insect juvenile hormone III in the mandibular organ. Also has hyperglycemic activity. This chain is Mandibular organ-inhibiting hormone, found in Libinia emarginata (Portly spider crab).